Consider the following 355-residue polypeptide: Histidinol-phosphate aminotransferase (355 aa).

An N6-(pyridoxal phosphate)lysine modification is found at Lys-222.

Belongs to the class-II pyridoxal-phosphate-dependent aminotransferase family. Histidinol-phosphate aminotransferase subfamily. The cofactor is pyridoxal 5'-phosphate.

The enzyme catalyses L-histidinol phosphate + 2-oxoglutarate = 3-(imidazol-4-yl)-2-oxopropyl phosphate + L-glutamate. Its pathway is amino-acid biosynthesis; L-histidine biosynthesis; L-histidine from 5-phospho-alpha-D-ribose 1-diphosphate: step 7/9. In Natronomonas pharaonis (strain ATCC 35678 / DSM 2160 / CIP 103997 / JCM 8858 / NBRC 14720 / NCIMB 2260 / Gabara) (Halobacterium pharaonis), this protein is Histidinol-phosphate aminotransferase.